We begin with the raw amino-acid sequence, 456 residues long: Argininosuccinate lyase (456 aa).

Belongs to the lyase 1 family. Argininosuccinate lyase subfamily.

The protein resides in the cytoplasm. The enzyme catalyses 2-(N(omega)-L-arginino)succinate = fumarate + L-arginine. It participates in amino-acid biosynthesis; L-arginine biosynthesis; L-arginine from L-ornithine and carbamoyl phosphate: step 3/3. This is Argininosuccinate lyase from Shewanella pealeana (strain ATCC 700345 / ANG-SQ1).